The primary structure comprises 166 residues: Large ribosomal subunit protein uL10 (166 aa).

Belongs to the universal ribosomal protein uL10 family. In terms of assembly, part of the ribosomal stalk of the 50S ribosomal subunit. The N-terminus interacts with L11 and the large rRNA to form the base of the stalk. The C-terminus forms an elongated spine to which L12 dimers bind in a sequential fashion forming a multimeric L10(L12)X complex.

In terms of biological role, forms part of the ribosomal stalk, playing a central role in the interaction of the ribosome with GTP-bound translation factors. This is Large ribosomal subunit protein uL10 from Oceanobacillus iheyensis (strain DSM 14371 / CIP 107618 / JCM 11309 / KCTC 3954 / HTE831).